The sequence spans 376 residues: Putative glutamate--cysteine ligase 2 (376 aa).

The protein belongs to the glutamate--cysteine ligase type 2 family. YbdK subfamily.

It catalyses the reaction L-cysteine + L-glutamate + ATP = gamma-L-glutamyl-L-cysteine + ADP + phosphate + H(+). Its function is as follows. ATP-dependent carboxylate-amine ligase which exhibits weak glutamate--cysteine ligase activity. The polypeptide is Putative glutamate--cysteine ligase 2 (Mycolicibacterium paratuberculosis (strain ATCC BAA-968 / K-10) (Mycobacterium paratuberculosis)).